The chain runs to 73 residues: Large ribosomal subunit protein bL27c (73 aa).

It belongs to the bacterial ribosomal protein bL27 family.

Its subcellular location is the plastid. The protein localises to the chloroplast. This is Large ribosomal subunit protein bL27c (rpl27) from Chrysochromulina alifera (Plankton alga).